A 340-amino-acid chain; its full sequence is Deubiquitinase SseL (340 aa).

The active site involves H223. Residue C285 is the Nucleophile of the active site.

It belongs to the peptidase C79 family.

The protein localises to the secreted. It localises to the host cytoplasm. In terms of biological role, effector proteins function to alter host cell physiology and promote bacterial survival in host tissues. This protease targets the host cell ubiquitin pathway by acting as a deubiquitinase in infected host cells. This Salmonella choleraesuis (strain SC-B67) protein is Deubiquitinase SseL (sseL).